The primary structure comprises 68 residues: MKTKEIRNLSDQDLQKQLEQSKSELFNLRFQLATGQLENPMMIGLVKKDIARIKTIIRERELNIGKEA.

Belongs to the universal ribosomal protein uL29 family.

This is Large ribosomal subunit protein uL29 from Finegoldia magna (strain ATCC 29328 / DSM 20472 / WAL 2508) (Peptostreptococcus magnus).